The chain runs to 323 residues: Thiamine-monophosphate kinase (323 aa).

The Mg(2+) site is built by aspartate 30, serine 45, threonine 46, and aspartate 47. Substrate is bound at residue histidine 54. Mg(2+)-binding residues include aspartate 75 and aspartate 122. ATP-binding positions include 121–122 and arginine 146; that span reads GD. Aspartate 212 is a Mg(2+) binding site. An ATP-binding site is contributed by serine 214. Aspartate 215 contributes to the Mg(2+) binding site. The substrate site is built by glutamate 263 and phenylalanine 319.

Belongs to the thiamine-monophosphate kinase family.

It carries out the reaction thiamine phosphate + ATP = thiamine diphosphate + ADP. It functions in the pathway cofactor biosynthesis; thiamine diphosphate biosynthesis; thiamine diphosphate from thiamine phosphate: step 1/1. In terms of biological role, catalyzes the ATP-dependent phosphorylation of thiamine-monophosphate (TMP) to form thiamine-pyrophosphate (TPP), the active form of vitamin B1. The chain is Thiamine-monophosphate kinase from Buchnera aphidicola subsp. Acyrthosiphon pisum (strain APS) (Acyrthosiphon pisum symbiotic bacterium).